The primary structure comprises 282 residues: Shikimate dehydrogenase (NADP(+)) (282 aa).

Shikimate-binding positions include 19–21 (SFS) and T66. The Proton acceptor role is filled by K70. The shikimate site is built by N91 and D106. NADP(+)-binding positions include 130–134 (GAGGA), 152–157 (NRTVEK), T196, M200, and L224. Y226 serves as a coordination point for shikimate. G247 is a binding site for NADP(+).

Belongs to the shikimate dehydrogenase family. Homodimer.

The enzyme catalyses shikimate + NADP(+) = 3-dehydroshikimate + NADPH + H(+). Its pathway is metabolic intermediate biosynthesis; chorismate biosynthesis; chorismate from D-erythrose 4-phosphate and phosphoenolpyruvate: step 4/7. In terms of biological role, involved in the biosynthesis of the chorismate, which leads to the biosynthesis of aromatic amino acids. Catalyzes the reversible NADPH linked reduction of 3-dehydroshikimate (DHSA) to yield shikimate (SA). This chain is Shikimate dehydrogenase (NADP(+)), found in Methanocaldococcus jannaschii (strain ATCC 43067 / DSM 2661 / JAL-1 / JCM 10045 / NBRC 100440) (Methanococcus jannaschii).